Reading from the N-terminus, the 370-residue chain is Probable endopolygalacturonase A (370 aa).

Residues 1-19 form the signal peptide; sequence MPSAKPLFCLATLAGAALA. Positions 20–32 are excised as a propeptide; sequence APAPSRATDFNKR. A disulfide bridge links cysteine 35 with cysteine 50. 6 PbH1 repeats span residues 162–192, 193–214, 215–235, 244–265, 273–295, and 307–352; these read SDNLVIEDVTIDNSDGDSEGGHNTDGFDISE, STYITITGATVKNQDDCVAINS, GENIYFSGGTCSGGHGLSIGS, VKNVTFIDSTVSDSENGVRIKT, VEDITYSNIQLSGISDYGIVIEQ, and SNGV…DITG. Aspartate 207 serves as the catalytic Proton donor. The cysteines at positions 209 and 225 are disulfide-linked. Histidine 229 is a catalytic residue. Asparagine 246 is a glycosylation site (N-linked (GlcNAc...) asparagine). Intrachain disulfides connect cysteine 335–cysteine 340 and cysteine 359–cysteine 368.

This sequence belongs to the glycosyl hydrolase 28 family.

It is found in the secreted. It catalyses the reaction (1,4-alpha-D-galacturonosyl)n+m + H2O = (1,4-alpha-D-galacturonosyl)n + (1,4-alpha-D-galacturonosyl)m.. In terms of biological role, involved in maceration and soft-rotting of plant tissue. Hydrolyzes the 1,4-alpha glycosidic bonds of de-esterified pectate in the smooth region of the plant cell wall. In Aspergillus kawachii (strain NBRC 4308) (White koji mold), this protein is Probable endopolygalacturonase A (pgaA).